A 434-amino-acid polypeptide reads, in one-letter code: 3-phosphoshikimate 1-carboxyvinyltransferase (434 aa).

The 3-phosphoshikimate site is built by lysine 22, serine 23, and arginine 27. Lysine 22 contributes to the phosphoenolpyruvate binding site. Phosphoenolpyruvate is bound by residues glycine 93 and arginine 121. Serine 168, serine 169, glutamine 170, serine 199, aspartate 320, and lysine 347 together coordinate 3-phosphoshikimate. Glutamine 170 provides a ligand contact to phosphoenolpyruvate. Aspartate 320 acts as the Proton acceptor in catalysis. Phosphoenolpyruvate-binding residues include arginine 351, arginine 394, and lysine 419.

It belongs to the EPSP synthase family. In terms of assembly, monomer.

It is found in the cytoplasm. It catalyses the reaction 3-phosphoshikimate + phosphoenolpyruvate = 5-O-(1-carboxyvinyl)-3-phosphoshikimate + phosphate. The protein operates within metabolic intermediate biosynthesis; chorismate biosynthesis; chorismate from D-erythrose 4-phosphate and phosphoenolpyruvate: step 6/7. Functionally, catalyzes the transfer of the enolpyruvyl moiety of phosphoenolpyruvate (PEP) to the 5-hydroxyl of shikimate-3-phosphate (S3P) to produce enolpyruvyl shikimate-3-phosphate and inorganic phosphate. The protein is 3-phosphoshikimate 1-carboxyvinyltransferase of Burkholderia ambifaria (strain ATCC BAA-244 / DSM 16087 / CCUG 44356 / LMG 19182 / AMMD) (Burkholderia cepacia (strain AMMD)).